A 102-amino-acid chain; its full sequence is Alpha-hemoglobin-stabilizing protein (102 aa).

Belongs to the AHSP family. In terms of assembly, monomer. Forms a heterodimer with free alpha-hemoglobin. Does not bind beta-hemoglobin nor alpha(2)beta(2) hemoglobin A. Expressed in blood and bone marrow.

The protein localises to the cytoplasm. Acts as a chaperone to prevent the harmful aggregation of alpha-hemoglobin during normal erythroid cell development. Specifically protects free alpha-hemoglobin from precipitation. It is predicted to modulate pathological states of alpha-hemoglobin excess such as beta-thalassemia. The chain is Alpha-hemoglobin-stabilizing protein (AHSP) from Homo sapiens (Human).